The chain runs to 827 residues: Probable inorganic carbon transporter subunit DabA2 (827 aa).

Zn(2+) is bound by residues Cys-351, Asp-353, His-524, and Cys-539.

Belongs to the inorganic carbon transporter (TC 9.A.2) DabA family. In terms of assembly, forms a complex with DabB2, possibly a heterodimer. It depends on Zn(2+) as a cofactor.

Its subcellular location is the cell inner membrane. With respect to regulation, uptake of inorganic carbon by cells in the presence of thiosulphate is fully inhibited by the uncouplers carbonyl cyanide m-chlorophenyl hydrazone (CCCP), carbonyl cyanide p-trifluoromethoxyphenyl hydrazone (FCCP), S13 or SF6847. Not inhibited by the ATPase inhibitor N,N-dicyclohexylcarbodiimide (DCCD). Inorganic carbon uptake is inhibited by the ionophore CCCP, suggesting uptake is coupled to a cation gradient. In terms of biological role, part of an energy-coupled inorganic carbon pump; its substrate may be carbon dioxide. Expression of both dabA2 and dabB2 (DAB2) restores growth in ambient air to E.coli deleted of its carbonic anhydrase genes (called CAfree, deletion of 'can' and 'cynT'); neither dabA2 or dabB2 alone is sufficient. Rescue is pH-independent, suggesting it transports CO(2) and not carbonate ions. Together the genes allow greater than normal uptake of inorganic carbon by E.coli. Uptake of carbon dioxide rather than bicarbonate has been suggested based on kinetic calculations. This Halothiobacillus neapolitanus (strain ATCC 23641 / c2) (Thiobacillus neapolitanus) protein is Probable inorganic carbon transporter subunit DabA2.